The following is a 1349-amino-acid chain: Periaxin (1349 aa).

Ser-7 is modified (phosphoserine). Residues 16–99 (LVEIIVETEA…YKVSFCLKRT (84 aa)) form the PDZ domain. Positions 70 to 84 (VFFENFKYEDALRLL) match the Nuclear export signal motif. Ser-133 is modified (phosphoserine). 41 repeat units span residues 402–406 (PPEVK), 410–414 (GPEVK), 418–422 (VPEVK), 426–430 (MPEPV), 431–435 (LPEVR), 436–440 (LPEVE), 444–448 (VSEMK), 452–456 (VPEMA), 457–461 (VPEVR), 462–466 (LPEVQ), 467–471 (LPKVP), 472–476 (EMKLP), 477–481 (EVKLP), 485–489 (EMAVP), 493–497 (LPEVQ), 501–505 (VPEMK), 506–510 (LPEVK), 514–518 (VPEMA), 519–523 (VPEVR), 524–528 (LPEVQ), 532–536 (VPEMK), 537–549 (LPKV…PEMK), 553–557 (VPEMA), 558–562 (VPEVR), 563–567 (LPEVQ), 571–575 (VPEVK), 576–580 (LPEVK), 589–593 (VPEMA), 594–598 (VPEVH), 599–603 (LPEVQ), 612–616 (VPDVK), 617–621 (LPEVK), 622–626 (LPEIK), 630–634 (VPEMV), 635–639 (VPDVH), 643–647 (VHLPK), 648–652 (VSEMR), 653–657 (LPEVQ), 661–665 (VPEVH), 669–673 (APEVK), and 674–678 (LPKAP). The tract at residues 402–678 (PPEVKVPKGP…APEVKLPKAP (277 aa)) is 41 X 5 AA approximate tandem repeats of [LVMGIE]-[PSM]-[EDKA]-[LIVMA]-[AQKHPRT]; that may have a tripeptide spacer of [ALKD]-[IPV]-[KPH]. A phosphoserine mark is found at Ser-794 and Ser-974. Positions 1207 to 1218 (AKEGAEEGEKAK) are enriched in basic and acidic residues. The segment at 1207–1349 (AKEGAEEGEK…RMEGAQAAVI (143 aa)) is disordered. A compositionally biased stretch (low complexity) spans 1232–1242 (SEAVSGEGSPS). 6 positions are modified to phosphoserine: Ser-1236, Ser-1240, Ser-1242, Ser-1289, Ser-1295, and Ser-1327.

This sequence belongs to the periaxin family. As to quaternary structure, homodimer (via PDZ domain). Interacts with SCN10A. Found in a complex with SCN10A. Interacts with DRP2. Identified in a dystroglycan complex that contains at least PRX, DRP2, UTRN, DMD and DAG1. Detected in a complex composed of at least EZR, AHNAK, PPL and PRX. Identified in a complex with EZR, AHNAK, BFSP1, BFSP2, ANK2, PLEC, VIM and spectrin. As to expression, detected in eye lens (at protein level).

Its subcellular location is the nucleus. The protein resides in the cytoplasm. The protein localises to the cell membrane. It localises to the cell junction. It is found in the adherens junction. In terms of biological role, scaffolding protein that functions as part of a dystroglycan complex in Schwann cells, and as part of EZR and AHNAK-containing complexes in eye lens fiber cells. Required for the maintenance of the peripheral myelin sheath that is essential for normal transmission of nerve impulses and normal perception of sensory stimuli. Required for normal transport of MBP mRNA from the perinuclear to the paranodal regions. Required for normal remyelination after nerve injury. Required for normal elongation of Schwann cells and normal length of the internodes between the nodes of Ranvier. The demyelinated nodes of Ranvier permit saltatory transmission of nerve impulses; shorter internodes cause slower transmission of nerve impulses. Required for the formation of appositions between the abaxonal surface of the myelin sheath and the Schwann cell plasma membrane; the Schwann cell cytoplasm is restricted to regions between these appositions. Required for the formation of Cajal bands and of Schmidt-Lanterman incisures that correspond to short, cytoplasm-filled regions on myelinated nerves. Recruits DRP2 to the Schwann cell plasma membrane. Required for normal protein composition of the eye lens fiber cell plasma membrane and normal eye lens fiber cell morphology. This Bos taurus (Bovine) protein is Periaxin (PRX).